A 119-amino-acid chain; its full sequence is Fluoride-specific ion channel FluC 1 (119 aa).

Helical transmembrane passes span 6-26 (VALV…IAVV), 31-51 (FPWG…AIVY), 66-86 (VVAT…GETI), and 91-111 (RLAA…VLVA).

This sequence belongs to the fluoride channel Fluc/FEX (TC 1.A.43) family.

The protein resides in the cell membrane. It catalyses the reaction fluoride(in) = fluoride(out). Fluoride-specific ion channel. Important for reducing fluoride concentration in the cell, thus reducing its toxicity. This chain is Fluoride-specific ion channel FluC 1, found in Natronomonas pharaonis (strain ATCC 35678 / DSM 2160 / CIP 103997 / JCM 8858 / NBRC 14720 / NCIMB 2260 / Gabara) (Halobacterium pharaonis).